Consider the following 413-residue polypeptide: Clamp protein VP6 (413 aa).

The protein belongs to the reoviridae clamp protein family. Interacts with capsid proteins VP3, VP4 and VP7.

It localises to the virion. Its function is as follows. Located at the interface of the incomplete T=13 outer capsid and the pseudo T=2 inner capsid, 120 VP6 subunits clamp and stabilize the inner capsid shell. The chain is Clamp protein VP6 (S8) from Ctenopharyngodon idella (Grass carp).